The sequence spans 123 residues: Fluoride-specific ion channel FluC 1 (123 aa).

The next 3 helical transmembrane spans lie at 33 to 53, 59 to 79, and 98 to 118; these read TFLINISGAFVIGYLSVLFGV, YGTMLNAGVLTGILGGYTTFS, and VFYLVASVLSGLFAAWLGAML. Residues Gly-73 and Thr-76 each coordinate Na(+).

It belongs to the fluoride channel Fluc/FEX (TC 1.A.43) family.

It is found in the cell inner membrane. The catalysed reaction is fluoride(in) = fluoride(out). With respect to regulation, na(+) is not transported, but it plays an essential structural role and its presence is essential for fluoride channel function. Functionally, fluoride-specific ion channel. Important for reducing fluoride concentration in the cell, thus reducing its toxicity. The sequence is that of Fluoride-specific ion channel FluC 1 from Brucella melitensis biotype 1 (strain ATCC 23456 / CCUG 17765 / NCTC 10094 / 16M).